The sequence spans 377 residues: Histidinol-phosphate aminotransferase (377 aa).

Lysine 232 carries the post-translational modification N6-(pyridoxal phosphate)lysine.

It belongs to the class-II pyridoxal-phosphate-dependent aminotransferase family. Histidinol-phosphate aminotransferase subfamily. In terms of assembly, homodimer. Pyridoxal 5'-phosphate is required as a cofactor.

It carries out the reaction L-histidinol phosphate + 2-oxoglutarate = 3-(imidazol-4-yl)-2-oxopropyl phosphate + L-glutamate. The protein operates within amino-acid biosynthesis; L-histidine biosynthesis; L-histidine from 5-phospho-alpha-D-ribose 1-diphosphate: step 7/9. This is Histidinol-phosphate aminotransferase from Mycobacterium sp. (strain JLS).